The sequence spans 678 residues: Glycine--tRNA ligase beta subunit (678 aa).

This sequence belongs to the class-II aminoacyl-tRNA synthetase family. As to quaternary structure, tetramer of two alpha and two beta subunits.

It localises to the cytoplasm. The catalysed reaction is tRNA(Gly) + glycine + ATP = glycyl-tRNA(Gly) + AMP + diphosphate. This is Glycine--tRNA ligase beta subunit from Streptococcus pneumoniae (strain Taiwan19F-14).